Here is a 362-residue protein sequence, read N- to C-terminus: MYVKELFVDNFRNLQKQKIEFCEGINIFYGLNAQGKSNLLESIRLLSMGRSFRGSKTTELIKFGEDYFYVKAIICQENNDKKIEFGYKKNENKVIKVNGNKIKSTSELLGQLLTVIFSPEDLNIIKEGPSHRRKYLDSCISVVEKNYLYNLMQYNKILMNRNKLLKSIKEGKSKSILEIFDDQLVEYGAKIIVMRQNYLKNVEINIKKFLLEISNETAEIVYLNSVGLKDASDEEIVKKRLKEKLSKNIDVDLRYFTTQVGPHREDFKIIINGYDSRVYSSQGQQRTAALCLKLSEFEILKKETSEKPVLLLDDVMSELDENRKKYVLERLKGFQTFITHTTKRDLKGDCYFKISNGVVIKE.

Position 30–37 (30–37 (GLNAQGKS)) interacts with ATP.

Belongs to the RecF family.

It localises to the cytoplasm. In terms of biological role, the RecF protein is involved in DNA metabolism; it is required for DNA replication and normal SOS inducibility. RecF binds preferentially to single-stranded, linear DNA. It also seems to bind ATP. The protein is DNA replication and repair protein RecF of Thermoanaerobacter sp. (strain X514).